The following is a 351-amino-acid chain: Prostaglandin reductase 2 (351 aa).

Residue 99–100 (FY) participates in substrate binding. Residues 165 to 168 (GACG), Lys-192, Tyr-208, Asn-231, 253 to 259 (CGQISQY), 287 to 289 (FMV), and Asn-337 each bind NADP(+). Residue 288–290 (MVL) coordinates substrate.

Belongs to the NADP-dependent oxidoreductase L4BD family. As to quaternary structure, monomer.

It is found in the cytoplasm. It catalyses the reaction 13,14-dihydro-15-oxo-prostaglandin E2 + NAD(+) = 15-oxoprostaglandin E2 + NADH + H(+). It carries out the reaction 13,14-dihydro-15-oxo-prostaglandin E2 + NADP(+) = 15-oxoprostaglandin E2 + NADPH + H(+). The catalysed reaction is 13,14-dihydro-15-oxo-PGF2alpha + NADP(+) = 15-oxoprostaglandin F2alpha + NADPH + H(+). The enzyme catalyses 13,14-dihydro-15-oxo-prostaglandin E1 + NADP(+) = 15-oxoprostaglandin E1 + NADPH + H(+). It catalyses the reaction 13,14-dihydro-15-oxo-prostaglandin F1alpha + NADP(+) = 15-oxoprostaglandin F1alpha + NADPH + H(+). In terms of biological role, functions as 15-oxo-prostaglandin 13-reductase and acts on 15-keto-PGE1, 15-keto-PGE2, 15-keto-PGE1-alpha and 15-keto-PGE2-alpha with highest activity towards 15-keto-PGE2. Overexpression represses transcriptional activity of PPARG and inhibits adipocyte differentiation. This Rattus norvegicus (Rat) protein is Prostaglandin reductase 2.